Consider the following 87-residue polypeptide: Large ribosomal subunit protein bL31B (87 aa).

This sequence belongs to the bacterial ribosomal protein bL31 family. Type B subfamily. As to quaternary structure, part of the 50S ribosomal subunit.

This Escherichia coli O9:H4 (strain HS) protein is Large ribosomal subunit protein bL31B.